The primary structure comprises 557 residues: Dihydroxy-acid dehydratase (557 aa).

Cysteine 50 is a binding site for [2Fe-2S] cluster. A Mg(2+)-binding site is contributed by aspartate 82. Cysteine 123 lines the [2Fe-2S] cluster pocket. Mg(2+) is bound by residues aspartate 124 and lysine 125. Lysine 125 is subject to N6-carboxylysine. Cysteine 195 serves as a coordination point for [2Fe-2S] cluster. A Mg(2+)-binding site is contributed by glutamate 447. The Proton acceptor role is filled by serine 473.

Belongs to the IlvD/Edd family. Homodimer. Requires [2Fe-2S] cluster as cofactor. Mg(2+) serves as cofactor.

It carries out the reaction (2R)-2,3-dihydroxy-3-methylbutanoate = 3-methyl-2-oxobutanoate + H2O. The enzyme catalyses (2R,3R)-2,3-dihydroxy-3-methylpentanoate = (S)-3-methyl-2-oxopentanoate + H2O. It participates in amino-acid biosynthesis; L-isoleucine biosynthesis; L-isoleucine from 2-oxobutanoate: step 3/4. Its pathway is amino-acid biosynthesis; L-valine biosynthesis; L-valine from pyruvate: step 3/4. In terms of biological role, functions in the biosynthesis of branched-chain amino acids. Catalyzes the dehydration of (2R,3R)-2,3-dihydroxy-3-methylpentanoate (2,3-dihydroxy-3-methylvalerate) into 2-oxo-3-methylpentanoate (2-oxo-3-methylvalerate) and of (2R)-2,3-dihydroxy-3-methylbutanoate (2,3-dihydroxyisovalerate) into 2-oxo-3-methylbutanoate (2-oxoisovalerate), the penultimate precursor to L-isoleucine and L-valine, respectively. The protein is Dihydroxy-acid dehydratase of Ralstonia nicotianae (strain ATCC BAA-1114 / GMI1000) (Ralstonia solanacearum).